Here is a 748-residue protein sequence, read N- to C-terminus: MTIRSPETEVKIVVEKDPVKTSFEKWAQPGHFSRTLAKGPSTTTWIWNLHADAHDFDSHTSDLEEISRKVFSAHFGQIAVILIWLSGMYFHGARFSNYEAWLSDPTHIKPSAQVVWPIVGQEILNGDVGGGFQGVQITSGFFQIWRASGITSELQLYSTAIGGLVLATLTLIGGWYHYHKAAPTLAWFQDVESMLNHHLAGLIGLGSLSWAGHQIHVSLPINQLLDAGVDPKEIPLPHEFILNRELLAQLYPSFSKGLTPFFTLNWSEYSDFLTFRGGLNPVTGGLWLSDTAHHHLAIAVLFIIAGHQYRTNWGIGHSLREILEAHKGPFTGEGHKGLYEILTTSWHAQLALNLALFGSLTIIVAHHMYAMPPYPYLATDYGTQLSLFTHHMWIGGFLVTGAAAHAAIFLVRDYDPTTQYNNLLDRVLRHRDAIISHLNWVCIFLGFHSFGLYIHNDTMSALGRPQDMFSDTAIQLQPVFAQWIQNTHTLAPTLTAPNAASSTSITWGGNLVAVGGKVALLPIPLGTADFLVHHIHAFTIHVTVLILLKGVLFARSSRLIPDKANLGFRFPCDGPGRGGTCQVSAWDHVFLGLFWMYNSISVVIFHFSWKMQSDVWGTVTSNGVSNITGGNFAQSANTINGWLRDFLWAQASQVIQSYGSALSAYGLIFLGAHFVWAFSLMFLFSGRGYWQELIESIVWAHNKLKVAPAIQPRALSIIQGRAVGVAHYLLGGIATTWAFFLARIISVG.

8 helical membrane-spanning segments follow: residues valine 70 to alanine 93, leucine 156 to histidine 179, leucine 195 to leucine 219, threonine 291 to tyrosine 309, tryptophan 346 to tyrosine 369, leucine 385 to valine 411, alanine 433 to histidine 455, and phenylalanine 530 to leucine 548. [4Fe-4S] cluster contacts are provided by cysteine 572 and cysteine 581. The next 2 membrane-spanning stretches (helical) occupy residues histidine 588–tryptophan 609 and leucine 662–phenylalanine 684. Position 673 (histidine 673) interacts with chlorophyll a'. Methionine 681 and tyrosine 689 together coordinate chlorophyll a. Tryptophan 690 provides a ligand contact to phylloquinone. A helical membrane pass occupies residues alanine 722 to alanine 742.

The protein belongs to the PsaA/PsaB family. In terms of assembly, the PsaA/B heterodimer binds the P700 chlorophyll special pair and subsequent electron acceptors. PSI consists of a core antenna complex that captures photons, and an electron transfer chain that converts photonic excitation into a charge separation. The eukaryotic PSI reaction center is composed of at least 11 subunits. The cofactor is P700 is a chlorophyll a/chlorophyll a' dimer, A0 is one or more chlorophyll a, A1 is one or both phylloquinones and FX is a shared 4Fe-4S iron-sulfur center..

Its subcellular location is the plastid. It is found in the chloroplast thylakoid membrane. The catalysed reaction is reduced [plastocyanin] + hnu + oxidized [2Fe-2S]-[ferredoxin] = oxidized [plastocyanin] + reduced [2Fe-2S]-[ferredoxin]. In terms of biological role, psaA and PsaB bind P700, the primary electron donor of photosystem I (PSI), as well as the electron acceptors A0, A1 and FX. PSI is a plastocyanin-ferredoxin oxidoreductase, converting photonic excitation into a charge separation, which transfers an electron from the donor P700 chlorophyll pair to the spectroscopically characterized acceptors A0, A1, FX, FA and FB in turn. Oxidized P700 is reduced on the lumenal side of the thylakoid membrane by plastocyanin. This is Photosystem I P700 chlorophyll a apoprotein A1 from Chaetosphaeridium globosum (Charophycean green alga).